We begin with the raw amino-acid sequence, 193 residues long: Corrinoid adenosyltransferase (193 aa).

ATP contacts are provided by residues Thr5–Thr13, Lys22, Arg130–Arg135, and Asn154.

The protein belongs to the Cob(I)alamin adenosyltransferase family. In terms of assembly, homotrimer.

It is found in the cytoplasm. It carries out the reaction 2 cob(II)yrinate a,c diamide + reduced [electron-transfer flavoprotein] + 2 ATP = 2 adenosylcob(III)yrinate a,c-diamide + 2 triphosphate + oxidized [electron-transfer flavoprotein] + 3 H(+). It catalyses the reaction 2 cob(II)alamin + reduced [electron-transfer flavoprotein] + 2 ATP = 2 adenosylcob(III)alamin + 2 triphosphate + oxidized [electron-transfer flavoprotein] + 3 H(+). It participates in cofactor biosynthesis; adenosylcobalamin biosynthesis; adenosylcobalamin from cob(II)yrinate a,c-diamide: step 2/7. This Bacillus subtilis (strain 168) protein is Corrinoid adenosyltransferase (yvqK).